The following is a 277-amino-acid chain: Elongation factor Ts (277 aa).

Residues 81 to 84 (TDFV) form an involved in Mg(2+) ion dislocation from EF-Tu region.

The protein belongs to the EF-Ts family.

Its subcellular location is the cytoplasm. Functionally, associates with the EF-Tu.GDP complex and induces the exchange of GDP to GTP. It remains bound to the aminoacyl-tRNA.EF-Tu.GTP complex up to the GTP hydrolysis stage on the ribosome. The sequence is that of Elongation factor Ts from Amoebophilus asiaticus (strain 5a2).